The sequence spans 620 residues: Schwann cell myelin protein (620 aa).

An N-terminal signal peptide occupies residues Met-1–Ser-17. Over Ala-18 to Pro-516 the chain is Extracellular. Residues Met-28–Leu-106 enclose the Ig-like V-type domain. 3 cysteine pairs are disulfide-bonded: Cys-35-Cys-164, Cys-40-Cys-99, and Cys-158-Cys-216. Position 117 (Arg-117) interacts with N-acetylneuraminate. Ig-like C2-type domains lie at Gly-151 to Leu-233, Pro-239 to Ala-322, Pro-325 to Ser-407, and Val-414 to Gly-495. N-linked (GlcNAc...) asparagine glycosylation is present at Asn-222. An intrachain disulfide couples Cys-260 to Cys-304. Residues Asn-314 and Asn-331 are each glycosylated (N-linked (GlcNAc...) asparagine). The cysteines at positions 346 and 391 are disulfide-linked. N-linked (GlcNAc...) asparagine glycosylation is present at Asn-405. Disulfide bonds link Cys-420/Cys-429 and Cys-431/Cys-488. The N-linked (GlcNAc...) asparagine glycan is linked to Asn-449. Residues Val-517 to Ser-536 form a helical membrane-spanning segment. Over Arg-537–Lys-620 the chain is Cytoplasmic. 2 disordered regions span residues Lys-539–Leu-562 and Val-583–Lys-620.

This sequence belongs to the immunoglobulin superfamily. SIGLEC (sialic acid binding Ig-like lectin) family. In terms of tissue distribution, exclusively expressed by myelinating and nonmyelinating Schwann cells and oligodendrocytes.

The protein resides in the membrane. This Coturnix japonica (Japanese quail) protein is Schwann cell myelin protein (SMP).